The following is a 77-amino-acid chain: UPF0346 protein LMOf2365_1885 (77 aa).

It belongs to the UPF0346 family.

This is UPF0346 protein LMOf2365_1885 from Listeria monocytogenes serotype 4b (strain F2365).